A 457-amino-acid polypeptide reads, in one-letter code: Chromosomal replication initiator protein DnaA (457 aa).

The tract at residues 1 to 77 is domain I, interacts with DnaA modulators; that stretch reads MDTNNNIEKE…EILSQNKVGM (77 aa). The domain II stretch occupies residues 77 to 108; that stretch reads MHLAHSVDVRIEVAPKIQVNAQSNINYKATKT. Residues 109-323 form a domain III, AAA+ region region; sequence SVKDSYTFEN…GAIIKISVNA (215 aa). G153, G155, K156, and T157 together coordinate ATP. The interval 324 to 457 is domain IV, binds dsDNA; it reads NLMNATIDLN…DKKTAFNSSE (134 aa).

This sequence belongs to the DnaA family. As to quaternary structure, oligomerizes as a right-handed, spiral filament on DNA at oriC.

Its subcellular location is the cytoplasm. Functionally, plays an essential role in the initiation and regulation of chromosomal replication. ATP-DnaA binds to the origin of replication (oriC) to initiate formation of the DNA replication initiation complex once per cell cycle. Binds the DnaA box (a 9 base pair repeat at the origin) and separates the double-stranded (ds)DNA. Forms a right-handed helical filament on oriC DNA; dsDNA binds to the exterior of the filament while single-stranded (ss)DNA is stabiized in the filament's interior. The ATP-DnaA-oriC complex binds and stabilizes one strand of the AT-rich DNA unwinding element (DUE), permitting loading of DNA polymerase. After initiation quickly degrades to an ADP-DnaA complex that is not apt for DNA replication. Binds acidic phospholipids. This is Chromosomal replication initiator protein DnaA from Helicobacter pylori (strain J99 / ATCC 700824) (Campylobacter pylori J99).